A 70-amino-acid polypeptide reads, in one-letter code: Protein tam14 (70 aa).

The segment covering M1 to N19 has biased composition (polar residues). Residues M1–I20 are disordered. Residues I45–L65 traverse the membrane as a helical segment.

Belongs to the RAMP4 family.

The protein localises to the membrane. It localises to the endoplasmic reticulum membrane. Its function is as follows. Interacts with target proteins during their translocation into the lumen of the endoplasmic reticulum. Protects unfolded target proteins against degradation during ER stress. May facilitate glycosylation of target proteins after termination of ER stress. The protein is Protein tam14 (tam14) of Schizosaccharomyces pombe (strain 972 / ATCC 24843) (Fission yeast).